Consider the following 92-residue polypeptide: Small ribosomal subunit protein uS19c (92 aa).

This sequence belongs to the universal ribosomal protein uS19 family.

The protein localises to the plastid. It localises to the chloroplast. In terms of biological role, protein S19 forms a complex with S13 that binds strongly to the 16S ribosomal RNA. This is Small ribosomal subunit protein uS19c from Chloranthus spicatus (Chulantree).